The primary structure comprises 291 residues: Protease HtpX homolog (291 aa).

A run of 2 helical transmembrane segments spans residues 4–24 and 38–58; these read VFLF…SARL and MGML…ISLL. His-144 serves as a coordination point for Zn(2+). The active site involves Glu-145. His-148 is a Zn(2+) binding site. Transmembrane regions (helical) follow at residues 159–179 and 199–219; these read LIQG…AYAL and ISSI…VMYF. Glu-224 contacts Zn(2+).

This sequence belongs to the peptidase M48B family. Requires Zn(2+) as cofactor.

Its subcellular location is the cell inner membrane. This chain is Protease HtpX homolog, found in Chlorobium phaeovibrioides (strain DSM 265 / 1930) (Prosthecochloris vibrioformis (strain DSM 265)).